Here is a 2849-residue protein sequence, read N- to C-terminus: Immunoglobulin-like and fibronectin type III domain-containing protein 1 (2849 aa).

A disordered region spans residues Ala-82–Leu-108. Residues Gly-90–Ser-101 show a composition bias toward low complexity. Residues Pro-187 to Thr-277 enclose the Ig-like 1 domain. Residues Ile-347 to His-380 are a coiled coil. In terms of domain architecture, Ig-like 2 spans Pro-468–Gly-557. Disordered stretches follow at residues Leu-577–Leu-600, Val-652–Arg-760, Tyr-864–Ser-924, Val-962–Gln-981, Glu-1061–Ala-1103, Thr-1221–Gly-1258, Ser-1312–His-1338, Arg-1350–Glu-1384, Glu-1498–Glu-1523, Glu-1654–Ile-1675, Gln-1724–His-1780, and Gly-1827–His-2055. Positions His-717–Arg-742 are enriched in basic and acidic residues. Residues Gly-866–Ser-880 are compositionally biased toward polar residues. Residues Arg-1070–Gly-1084 are compositionally biased toward gly residues. A compositionally biased stretch (polar residues) spans Ser-1873 to Leu-1882. 2 stretches are compositionally biased toward basic and acidic residues: residues Ser-1988–Gln-2004 and Ser-2012–Ser-2021. The Ig-like 3 domain maps to Pro-2034 to Thr-2137. 3 consecutive Fibronectin type-III domains span residues Pro-2244–Glu-2339, Pro-2344–Pro-2443, and Pro-2445–Ala-2540. In terms of domain architecture, Ig-like 4 spans Pro-2544–Thr-2628. One can recognise a Fibronectin type-III 4 domain in the interval Ala-2641–Gln-2735. Residues Pro-2749–Thr-2845 form the Ig-like 5 domain.

In terms of assembly, interacts with FLNC. Interacts with KY. As to expression, isoform 1, isoform 3 and isoform 4 are expressed in skeletal muscle while isoform 2 is detected in both skeletal muscle and heart (at protein level).

It localises to the nucleus. The protein localises to the cytoplasm. The protein resides in the myofibril. It is found in the sarcomere. Its subcellular location is the z line. The protein is Immunoglobulin-like and fibronectin type III domain-containing protein 1 (Igfn1) of Mus musculus (Mouse).